The following is a 702-amino-acid chain: Methionine--tRNA ligase (702 aa).

The 'HIGH' region signature appears at 14–24 (PYANGPVHLGH). Residues cysteine 146, cysteine 149, cysteine 159, and cysteine 162 each coordinate Zn(2+). The 'KMSKS' region signature appears at 344 to 348 (KFSKS). Residue lysine 347 coordinates ATP. The tRNA-binding domain maps to 601–702 (DFLKVDLRVA…GDEINGQQIQ (102 aa)).

It belongs to the class-I aminoacyl-tRNA synthetase family. MetG type 1 subfamily. As to quaternary structure, homodimer. It depends on Zn(2+) as a cofactor.

Its subcellular location is the cytoplasm. The catalysed reaction is tRNA(Met) + L-methionine + ATP = L-methionyl-tRNA(Met) + AMP + diphosphate. Functionally, is required not only for elongation of protein synthesis but also for the initiation of all mRNA translation through initiator tRNA(fMet) aminoacylation. This is Methionine--tRNA ligase from Chlorobium limicola (strain DSM 245 / NBRC 103803 / 6330).